The sequence spans 586 residues: CTP synthase 2 (586 aa).

The Glutamine amidotransferase type-1 domain occupies 300-554 (SIALVGKYTK…LAATGNLNAH (255 aa)). Active-site for GATase activity residues include C399, H526, and E528. Phosphoserine occurs at positions 568, 571, and 574.

The protein belongs to the CTP synthase family.

It carries out the reaction UTP + L-glutamine + ATP + H2O = CTP + L-glutamate + ADP + phosphate + 2 H(+). The protein operates within pyrimidine metabolism; CTP biosynthesis via de novo pathway; CTP from UDP: step 2/2. Its function is as follows. Catalyzes the ATP-dependent amination of UTP to CTP with either L-glutamine or ammonia as the source of nitrogen. Constitutes the rate-limiting enzyme in the synthesis of cytosine nucleotides. The chain is CTP synthase 2 (Ctps2) from Mus musculus (Mouse).